The sequence spans 216 residues: Elongation factor Ts (216 aa).

Residues 81 to 84 (TDFV) form an involved in Mg(2+) ion dislocation from EF-Tu region.

This sequence belongs to the EF-Ts family.

The protein resides in the cytoplasm. In terms of biological role, associates with the EF-Tu.GDP complex and induces the exchange of GDP to GTP. It remains bound to the aminoacyl-tRNA.EF-Tu.GTP complex up to the GTP hydrolysis stage on the ribosome. The sequence is that of Elongation factor Ts from Geotalea daltonii (strain DSM 22248 / JCM 15807 / FRC-32) (Geobacter daltonii).